The primary structure comprises 205 residues: Glycerol-3-phosphate acyltransferase (205 aa).

The Periplasmic portion of the chain corresponds to 1–3 (MSA). Residues 4–24 (IAPGMILIAYLCGSISSAILV) form a helical membrane-spanning segment. The Cytoplasmic segment spans residues 25 to 52 (CRLCGLPDPRTSGSGNPGATNVLRIGGK). Residues 53 to 73 (GAAVAVLIFDVLKGMLPVWGA) traverse the membrane as a helical segment. Over 74-80 (YELGVSP) the chain is Periplasmic. The chain crosses the membrane as a helical span at residues 81-101 (FWLGLIAIAACLGHIWPVFFG). The Cytoplasmic segment spans residues 102 to 111 (FKGGKGVATA). The helical transmembrane segment at 112 to 132 (FGAIAPIGWDLTGVMAGTWLL) threads the bilayer. Over 133-137 (TVLLS) the chain is Periplasmic. The chain crosses the membrane as a helical span at residues 138–158 (GYSSLGAIVSALIAPFYVWWF). The Cytoplasmic portion of the chain corresponds to 159 to 205 (KPQFTFPVSMLSCLILLRHHDNIQRLWRRQETKIWTKFKRKREKDPE).

Belongs to the PlsY family. As to quaternary structure, probably interacts with PlsX.

The protein localises to the cell inner membrane. The catalysed reaction is sn-glycerol 3-phosphate + an acyl-CoA = a 1-acyl-sn-glycero-3-phosphate + CoA. It carries out the reaction a fatty acyl-[ACP] + sn-glycerol 3-phosphate = a 1-acyl-sn-glycero-3-phosphate + holo-[ACP]. It functions in the pathway lipid metabolism; phospholipid metabolism. Functionally, catalyzes the transfer of an acyl group from acyl-ACP to glycerol-3-phosphate (G3P) to form lysophosphatidic acid (LPA). This enzyme can also utilize acyl-CoA as fatty acyl donor, but not acyl-PO(4). In Escherichia coli O8 (strain IAI1), this protein is Glycerol-3-phosphate acyltransferase.